A 594-amino-acid polypeptide reads, in one-letter code: Arginine--tRNA ligase (594 aa).

A 'HIGH' region motif is present at residues Ala133 to Ser143.

This sequence belongs to the class-I aminoacyl-tRNA synthetase family. In terms of assembly, monomer.

It localises to the cytoplasm. It carries out the reaction tRNA(Arg) + L-arginine + ATP = L-arginyl-tRNA(Arg) + AMP + diphosphate. This is Arginine--tRNA ligase from Leptospira biflexa serovar Patoc (strain Patoc 1 / Ames).